An 87-amino-acid polypeptide reads, in one-letter code: MARVTVEDCLENVDNRFELVMLASKRARQLATGGKEPRLPWENDKPTVVALREIAAGLVDYNVIAQDEIVAEEPLFAAFEEDSNEAL.

This sequence belongs to the RNA polymerase subunit omega family. As to quaternary structure, the RNAP catalytic core consists of 2 alpha, 1 beta, 1 beta' and 1 omega subunit. When a sigma factor is associated with the core the holoenzyme is formed, which can initiate transcription.

It catalyses the reaction RNA(n) + a ribonucleoside 5'-triphosphate = RNA(n+1) + diphosphate. Functionally, promotes RNA polymerase assembly. Latches the N- and C-terminal regions of the beta' subunit thereby facilitating its interaction with the beta and alpha subunits. This Azotobacter vinelandii (strain DJ / ATCC BAA-1303) protein is DNA-directed RNA polymerase subunit omega.